Consider the following 384-residue polypeptide: Methyl-CpG-binding domain-containing protein 10 (384 aa).

Residues 4-74 (TDELVSIELP…SEFEWTTGET (71 aa)) enclose the MBD domain. The tract at residues 65-384 (SEFEWTTGET…QQGAAASVSC (320 aa)) is disordered. Residues 80–91 (RISQKVKATTPT) are compositionally biased toward polar residues. A coiled-coil region spans residues 100 to 224 (KRRSSLTKKD…MEVDTSELEK (125 aa)). Basic and acidic residues-rich tracts occupy residues 106–227 (TKKD…KKAG), 234–250 (EPSK…KEAQ), and 257–269 (DVEK…KTEN). A compositionally biased stretch (polar residues) spans 270–284 (KGSVTTEANGEQNVT). Residues 295-365 (EADKGKESKE…NDMKAEDTNR (71 aa)) are compositionally biased toward basic and acidic residues. The stretch at 310 to 356 (TEAEANKENDTQESDEKKTEAAANKENETQESDVKKTEAAVAEEKSN) forms a coiled coil. Ser323 is modified (phosphoserine). The segment covering 369-384 (ANQVQQQQGAAASVSC) has biased composition (low complexity).

As to expression, expressed in leaves, buds, flowers, stems and siliques.

Its subcellular location is the nucleus. Functionally, probable transcriptional regulator. Required for nucleolar dominance that consist in the silencing of rRNA genes inherited from one progenitor in genetic hybrids. The chain is Methyl-CpG-binding domain-containing protein 10 (MBD10) from Arabidopsis thaliana (Mouse-ear cress).